A 187-amino-acid polypeptide reads, in one-letter code: Elongation factor P (187 aa).

This sequence belongs to the elongation factor P family.

It is found in the cytoplasm. It participates in protein biosynthesis; polypeptide chain elongation. In terms of biological role, involved in peptide bond synthesis. Stimulates efficient translation and peptide-bond synthesis on native or reconstituted 70S ribosomes in vitro. Probably functions indirectly by altering the affinity of the ribosome for aminoacyl-tRNA, thus increasing their reactivity as acceptors for peptidyl transferase. In Synechocystis sp. (strain ATCC 27184 / PCC 6803 / Kazusa), this protein is Elongation factor P (efp).